Here is a 578-residue protein sequence, read N- to C-terminus: Arginine--tRNA ligase (578 aa).

Positions 123–133 match the 'HIGH' region motif; that stretch reads PNIAKEMHVGH.

Belongs to the class-I aminoacyl-tRNA synthetase family. Monomer.

It localises to the cytoplasm. The catalysed reaction is tRNA(Arg) + L-arginine + ATP = L-arginyl-tRNA(Arg) + AMP + diphosphate. The chain is Arginine--tRNA ligase from Baumannia cicadellinicola subsp. Homalodisca coagulata.